The primary structure comprises 1321 residues: Indole-3-acetaldehyde oxidase (1321 aa).

The 2Fe-2S ferredoxin-type domain occupies 1-90 (MSLVFAINGQ…HCNITTSEGL (90 aa)). [2Fe-2S] cluster-binding residues include cysteine 42, cysteine 47, and cysteine 50. Residues 215–404 (VDSGMYRWCS…LSIEIPFWHS (190 aa)) enclose the FAD-binding PCMH-type domain.

This sequence belongs to the xanthine dehydrogenase family. Aldehyde oxidases (AO) are homodimers and heterodimers of AO subunits. AO-beta is a AAO1-AAO2 heterodimer; AO-gamma is a AAO2 homodimer. AAO2 also forms a dimer with AAO3. It depends on [2Fe-2S] cluster as a cofactor. The cofactor is FAD. Mo-molybdopterin is required as a cofactor. In terms of tissue distribution, weakly expressed in roots, leaves and seedlings. In seedlings, mostly expressed in lower part of hypocotyls. Detectable in seeds and mature siliques at low levels.

The protein resides in the cytoplasm. It catalyses the reaction indole-3-acetaldehyde + O2 + H2O = (indol-3-yl)acetate + H2O2 + H(+). Its activity is regulated as follows. Strongly inhibited by iodoacetate, potassium cyanide (KCN), 2-mercaptoethanol, dithiothreitol (DTT), p-chloromercuribenzoate, menadione and estradiol. Weakly inhibited by 4'-(9-acridinylamino)methanesulfon-m-anisidine (mAMSA) and tritonX-100. Not affected by allopurinol. In higher plant aldehyde oxidases (AO) appear to be homo- and heterodimeric assemblies of AO subunits with probably different physiological functions. In vitro, AO-gamma uses heptaldehyde, benzaldehyde, naphthaldehyde and cinnamaldehyde as substrates; AO-beta uses indole-3-acetaldehyde (IAAld), indole-3-aldehyde (IAld) and naphtaldehyde; the AAO2-AAO3 dimer uses abscisic aldehyde. In Arabidopsis thaliana (Mouse-ear cress), this protein is Indole-3-acetaldehyde oxidase (AAO2).